A 158-amino-acid polypeptide reads, in one-letter code: Protein Smg homolog (158 aa).

This sequence belongs to the Smg family.

The chain is Protein Smg homolog from Shewanella oneidensis (strain ATCC 700550 / JCM 31522 / CIP 106686 / LMG 19005 / NCIMB 14063 / MR-1).